The primary structure comprises 754 residues: 5-methyltetrahydropteroyltriglutamate--homocysteine methyltransferase (754 aa).

5-methyltetrahydropteroyltri-L-glutamate-binding positions include 17 to 20 (RELK) and Lys117. L-homocysteine-binding positions include 431 to 433 (IGS) and Glu484. Residues 431–433 (IGS) and Glu484 each bind L-methionine. 5-methyltetrahydropteroyltri-L-glutamate contacts are provided by residues 515–516 (RC) and Trp561. Asp599 contacts L-homocysteine. Residue Asp599 participates in L-methionine binding. Glu605 provides a ligand contact to 5-methyltetrahydropteroyltri-L-glutamate. Residues His641, Cys643, and Glu665 each coordinate Zn(2+). The active-site Proton donor is His694. Residue Cys726 coordinates Zn(2+).

The protein belongs to the vitamin-B12 independent methionine synthase family. Zn(2+) serves as cofactor.

It catalyses the reaction 5-methyltetrahydropteroyltri-L-glutamate + L-homocysteine = tetrahydropteroyltri-L-glutamate + L-methionine. The protein operates within amino-acid biosynthesis; L-methionine biosynthesis via de novo pathway; L-methionine from L-homocysteine (MetE route): step 1/1. Its function is as follows. Catalyzes the transfer of a methyl group from 5-methyltetrahydrofolate to homocysteine resulting in methionine formation. This is 5-methyltetrahydropteroyltriglutamate--homocysteine methyltransferase from Salmonella typhimurium (strain LT2 / SGSC1412 / ATCC 700720).